Reading from the N-terminus, the 200-residue chain is UPF0301 protein BOV_0485 (200 aa).

It belongs to the UPF0301 (AlgH) family.

This chain is UPF0301 protein BOV_0485, found in Brucella ovis (strain ATCC 25840 / 63/290 / NCTC 10512).